The chain runs to 260 residues: Fibronectin type III domain-containing protein 5 (260 aa).

The interval 1 to 56 (MQAARGGAGRPERPGRPGRGPERERERPPGAGAASPCAAPGLPAGGATIHPGSPSA) is disordered. The segment covering 10–28 (RPERPGRPGRGPERERERP) has biased composition (basic and acidic residues). A compositionally biased stretch (low complexity) spans 29-56 (PGAGAASPCAAPGLPAGGATIHPGSPSA). The Fibronectin type-III domain occupies 84–175 (APVNVTVRHL…EPVLFKTPRE (92 aa)). N87 and N132 each carry an N-linked (GlcNAc...) asparagine glycan. Residues 201–221 (GEVLIIVVVLFMWAGVIALFC) form a helical membrane-spanning segment. Positions 230–241 (NEPNNNKEKTKS) are enriched in basic and acidic residues. The segment at 230–260 (NEPNNNKEKTKSASETSTPEHQGGGLLRSKI) is disordered. The span at 251 to 260 (QGGGLLRSKI) shows a compositional bias: gly residues. A Microbody targeting signal motif is present at residues 258-260 (SKI).

In terms of assembly, dimer; may exist in other oligomeric forms. Post-translationally, the extracellular domain is cleaved and released from the cell membrane. N-Glycosylated. Widely expressed, with highest levels in heart. Very low expression, if any, in colon, pancreas and spleen.

The protein localises to the cell membrane. Its subcellular location is the peroxisome membrane. The protein resides in the secreted. Mediates beneficial effects of muscular exercise. Induces browning of white adipose tissue by stimulating UCP1 expression, at least in part, via the nuclear receptor PPARA. This chain is Fibronectin type III domain-containing protein 5 (FNDC5), found in Homo sapiens (Human).